Consider the following 80-residue polypeptide: RNA-binding protein Hfq (80 aa).

In terms of domain architecture, Sm spans 10–70; the sequence is DAFLNQVRKE…ISTISPLRPV (61 aa).

This sequence belongs to the Hfq family. In terms of assembly, homohexamer.

Its function is as follows. RNA chaperone that binds small regulatory RNA (sRNAs) and mRNAs to facilitate mRNA translational regulation in response to envelope stress, environmental stress and changes in metabolite concentrations. Also binds with high specificity to tRNAs. The sequence is that of RNA-binding protein Hfq from Desulforamulus reducens (strain ATCC BAA-1160 / DSM 100696 / MI-1) (Desulfotomaculum reducens).